The chain runs to 263 residues: Endonuclease 8 (263 aa).

Proline 2 acts as the Schiff-base intermediate with DNA in catalysis. Residue glutamate 3 is the Proton donor of the active site. Lysine 53 functions as the Proton donor; for beta-elimination activity in the catalytic mechanism. 3 residues coordinate DNA: glutamine 70, arginine 125, and asparagine 169. Residues 229-263 (KVFHRDGEACERCGGIIEKTTLSSRPFYWCPHCQK) form an FPG-type zinc finger. The active-site Proton donor; for delta-elimination activity is arginine 253.

The protein belongs to the FPG family. It depends on Zn(2+) as a cofactor.

It carries out the reaction 2'-deoxyribonucleotide-(2'-deoxyribose 5'-phosphate)-2'-deoxyribonucleotide-DNA = a 3'-end 2'-deoxyribonucleotide-(2,3-dehydro-2,3-deoxyribose 5'-phosphate)-DNA + a 5'-end 5'-phospho-2'-deoxyribonucleoside-DNA + H(+). Functionally, involved in base excision repair of DNA damaged by oxidation or by mutagenic agents. Acts as a DNA glycosylase that recognizes and removes damaged bases. Has a preference for oxidized pyrimidines, such as thymine glycol, 5,6-dihydrouracil and 5,6-dihydrothymine. Has AP (apurinic/apyrimidinic) lyase activity and introduces nicks in the DNA strand. Cleaves the DNA backbone by beta-delta elimination to generate a single-strand break at the site of the removed base with both 3'- and 5'-phosphates. The sequence is that of Endonuclease 8 from Salmonella heidelberg (strain SL476).